The primary structure comprises 168 residues: Cyanate hydratase (168 aa).

Residues R94, E97, and S120 contribute to the active site.

Belongs to the cyanase family.

The catalysed reaction is cyanate + hydrogencarbonate + 3 H(+) = NH4(+) + 2 CO2. In terms of biological role, catalyzes the reaction of cyanate with bicarbonate to produce ammonia and carbon dioxide. This Oryza sativa subsp. indica (Rice) protein is Cyanate hydratase.